The sequence spans 247 residues: 2,3-bisphosphoglycerate-dependent phosphoglycerate mutase (247 aa).

Substrate is bound by residues 8-15, 21-22, Arg60, 87-90, Lys98, 114-115, and 183-184; these read RHGESQWN, TG, ERHY, RR, and GN. His9 functions as the Tele-phosphohistidine intermediate in the catalytic mechanism. Glu87 acts as the Proton donor/acceptor in catalysis.

It belongs to the phosphoglycerate mutase family. BPG-dependent PGAM subfamily.

It catalyses the reaction (2R)-2-phosphoglycerate = (2R)-3-phosphoglycerate. It functions in the pathway carbohydrate degradation; glycolysis; pyruvate from D-glyceraldehyde 3-phosphate: step 3/5. In terms of biological role, catalyzes the interconversion of 2-phosphoglycerate and 3-phosphoglycerate. This Chlorobium phaeobacteroides (strain BS1) protein is 2,3-bisphosphoglycerate-dependent phosphoglycerate mutase.